A 23-amino-acid chain; its full sequence is Coenzyme PQQ synthesis protein A (23 aa).

Residues 15-19 constitute a cross-link (pyrroloquinoline quinone (Glu-Tyr)); it reads EVTLY.

Belongs to the PqqA family.

It participates in cofactor biosynthesis; pyrroloquinoline quinone biosynthesis. In terms of biological role, required for coenzyme pyrroloquinoline quinone (PQQ) biosynthesis. PQQ is probably formed by cross-linking a specific glutamate to a specific tyrosine residue and excising these residues from the peptide. This chain is Coenzyme PQQ synthesis protein A, found in Pseudomonas aeruginosa (strain UCBPP-PA14).